A 347-amino-acid chain; its full sequence is Guanine nucleotide-binding protein alpha-6 subunit (347 aa).

Residues 30-347 (GITQVLLLGA…IIVGHVMDLV (318 aa)) enclose the G-alpha domain. Residues 33–46 (QVLLLGAGESGKST) form a G1 motif region. Residues 38–45 (GAGESGKS), 172–178 (LRARVTT), 197–201 (DVGGQ), 266–269 (NKKD), and alanine 322 contribute to the GTP site. Positions 45 and 178 each coordinate Mg(2+). The interval 170–178 (DALRARVTT) is G2 motif. Residues 193 to 202 (MKIIDVGGQR) are G3 motif. The interval 262–269 (ILFLNKKD) is G4 motif. Residues 320 to 325 (TIAVDT) form a G5 motif region.

This sequence belongs to the G-alpha family. In terms of assembly, g proteins are composed of 3 units; alpha, beta and gamma. The alpha chain contains the guanine nucleotide binding site.

Functionally, guanine nucleotide-binding proteins (G proteins) are involved as modulators or transducers in various transmembrane signaling systems. G alpha-6 is involved in the folic acid chemotaxis signal transduction pathway. The protein is Guanine nucleotide-binding protein alpha-6 subunit (gpaF) of Dictyostelium discoideum (Social amoeba).